Consider the following 142-residue polypeptide: Large ribosomal subunit protein uL11 (142 aa).

Belongs to the universal ribosomal protein uL11 family. Part of the ribosomal stalk of the 50S ribosomal subunit. Interacts with L10 and the large rRNA to form the base of the stalk. L10 forms an elongated spine to which L12 dimers bind in a sequential fashion forming a multimeric L10(L12)X complex. In terms of processing, one or more lysine residues are methylated.

Forms part of the ribosomal stalk which helps the ribosome interact with GTP-bound translation factors. The polypeptide is Large ribosomal subunit protein uL11 (Shewanella pealeana (strain ATCC 700345 / ANG-SQ1)).